Here is a 231-residue protein sequence, read N- to C-terminus: Phosphoglycolate phosphatase (231 aa).

D9 functions as the Nucleophile in the catalytic mechanism. Residues D9 and D11 each contribute to the Mg(2+) site. K154 serves as a coordination point for substrate. 2 residues coordinate Mg(2+): D177 and D181.

It belongs to the archaeal SPP-like hydrolase family. Mg(2+) serves as cofactor.

The enzyme catalyses 2-phosphoglycolate + H2O = glycolate + phosphate. In terms of biological role, catalyzes the dephosphorylation of 2-phosphoglycolate. This is Phosphoglycolate phosphatase from Pyrococcus furiosus (strain ATCC 43587 / DSM 3638 / JCM 8422 / Vc1).